A 219-amino-acid polypeptide reads, in one-letter code: Probable nicotinate-nucleotide adenylyltransferase (219 aa).

Belongs to the NadD family.

The enzyme catalyses nicotinate beta-D-ribonucleotide + ATP + H(+) = deamido-NAD(+) + diphosphate. The protein operates within cofactor biosynthesis; NAD(+) biosynthesis; deamido-NAD(+) from nicotinate D-ribonucleotide: step 1/1. In terms of biological role, catalyzes the reversible adenylation of nicotinate mononucleotide (NaMN) to nicotinic acid adenine dinucleotide (NaAD). In Herminiimonas arsenicoxydans, this protein is Probable nicotinate-nucleotide adenylyltransferase.